Reading from the N-terminus, the 60-residue chain is Potassium channel toxin MeuTXKalpha3 (60 aa).

The first 22 residues, 1–22 (MKNYCGIITLFLAIISATGVFC), serve as a signal peptide directing secretion. 3 cysteine pairs are disulfide-bonded: cysteine 32/cysteine 50, cysteine 37/cysteine 55, and cysteine 41/cysteine 57. Proline 59 bears the Proline amide mark.

This sequence belongs to the short scorpion toxin superfamily. Potassium channel inhibitor family. In terms of tissue distribution, expressed by the venom gland.

It is found in the secreted. May block voltage-gated potassium channels (Kv). The polypeptide is Potassium channel toxin MeuTXKalpha3 (Mesobuthus eupeus (Lesser Asian scorpion)).